The following is a 406-amino-acid chain: Membrane protein UL43 homolog (406 aa).

10 consecutive transmembrane segments (helical) span residues 48–68 (LFLV…QYHV), 71–91 (AAVN…PTSV), 103–123 (CLQT…CPIS), 126–146 (LPFV…VAAV), 162–182 (IYFY…VILY), 188–208 (YEVL…VDAA), 266–286 (SVIP…SHII), 299–319 (LAVS…AVLY), 339–359 (IAVT…STVA), and 386–406 (VYHV…TYVS).

It belongs to the alphaherpesvirinae HHV-1 UL43 family.

It is found in the membrane. This is Membrane protein UL43 homolog from Varicella-zoster virus (strain Dumas) (HHV-3).